Here is a 345-residue protein sequence, read N- to C-terminus: Ferrochelatase (345 aa).

Positions 215 and 296 each coordinate Fe cation.

It belongs to the ferrochelatase family.

It localises to the cytoplasm. The catalysed reaction is heme b + 2 H(+) = protoporphyrin IX + Fe(2+). Its pathway is porphyrin-containing compound metabolism; protoheme biosynthesis; protoheme from protoporphyrin-IX: step 1/1. Catalyzes the ferrous insertion into protoporphyrin IX. The chain is Ferrochelatase from Rhodopseudomonas palustris (strain ATCC BAA-98 / CGA009).